Consider the following 345-residue polypeptide: RDS/peripherin-like protein xRDS35 (345 aa).

The Cytoplasmic segment spans residues 1 to 24; sequence MVLFKAKFSFQRRVKLAQTLWLLS. The helical transmembrane segment at 25 to 43 threads the bilayer; sequence WLSVLVGCLTFGMGIFLKV. Residues 44–61 are Lumenal-facing; the sequence is QLWIHNEVMENTSAHAVP. An N-linked (GlcNAc...) asparagine glycan is attached at Asn-54. A helical membrane pass occupies residues 62-80; that stretch reads NTVITAGLVGILLGIYAGK. At 81–99 the chain is on the cytoplasmic side; the sequence is VSQASMDVTKYQRWKSFMM. Residues 100-123 form a helical membrane-spanning segment; it reads PFFFLAILSCLVCLAALVLSVALR. Residues 124–264 are Lumenal-facing; sequence GTLEESLKIG…LSYYTGIMAT (141 aa). The N-linked (GlcNAc...) asparagine glycan is linked to Asn-229. A helical membrane pass occupies residues 265-290; that stretch reads NGAAVTLSFLLQASVLVSLRYLHTSM. Residues 291–345 lie on the Cytoplasmic side of the membrane; it reads DKISGPDDMEADTEGFILEKGVTETMNTTLEKMKGLFMSNQVETAEGGGEAAAAS.

The protein belongs to the PRPH2/ROM1 family. In terms of assembly, homodimer; disulfide-linked. Rod specific.

The protein localises to the membrane. The chain is RDS/peripherin-like protein xRDS35 (rds35) from Xenopus laevis (African clawed frog).